Reading from the N-terminus, the 459-residue chain is LAS seventeen-binding protein 3 (459 aa).

The interval 219 to 403 (RPSNGGRGSF…APTSPSTSSP (185 aa)) is disordered. Phosphoserine is present on S227. The span at 229-242 (DDDEDDYYDDDDYY) shows a compositional bias: acidic residues. The span at 243–262 (NDIPSSFSSTDASSTRPNTR) shows a compositional bias: low complexity. Positions 289-300 (YSRNSRLAPTNS) are enriched in polar residues. A Phosphothreonine modification is found at T298. S300 and S303 each carry phosphoserine. The span at 340–350 (DEYDDYDDDYE) shows a compositional bias: acidic residues. Basic and acidic residues predominate over residues 351–371 (SGYRRGNGRDRTKDREVDDLS). A compositionally biased stretch (polar residues) spans 372 to 391 (NRFSKSRISSASTPQTSQGR). Position 393 is a phosphothreonine (T393). Over residues 393–403 (TAPTSPSTSSP) the composition is skewed to low complexity. Phosphoserine occurs at positions 397, 402, and 416. Positions 400–459 (TSSPKAVALYSFAGEESGDLPFRKGDVITILKKSDSQNDWWTGRVNGREGIFPANYVELV) constitute an SH3 domain.

The protein belongs to the SH3YL1 family. In terms of assembly, interacts with LAS17. Post-translationally, phosphorylation of Ser-397 is induced 2-fold in response to mating pheromone.

The protein resides in the cytoplasm. In Saccharomyces cerevisiae (strain YJM789) (Baker's yeast), this protein is LAS seventeen-binding protein 3 (LSB3).